Consider the following 691-residue polypeptide: DNA ligase (691 aa).

NAD(+)-binding positions include 41–45 (DAEYD), 90–91 (SL), and Glu-130. Catalysis depends on Lys-132, which acts as the N6-AMP-lysine intermediate. Positions 153, 190, 307, and 331 each coordinate NAD(+). The Zn(2+) site is built by Cys-425, Cys-428, Cys-443, and Cys-449. Residues 610-691 (APQGVLAGKT…LHQLLEGNTP (82 aa)) form the BRCT domain.

Belongs to the NAD-dependent DNA ligase family. LigA subfamily. Mg(2+) serves as cofactor. The cofactor is Mn(2+).

It carries out the reaction NAD(+) + (deoxyribonucleotide)n-3'-hydroxyl + 5'-phospho-(deoxyribonucleotide)m = (deoxyribonucleotide)n+m + AMP + beta-nicotinamide D-nucleotide.. Its function is as follows. DNA ligase that catalyzes the formation of phosphodiester linkages between 5'-phosphoryl and 3'-hydroxyl groups in double-stranded DNA using NAD as a coenzyme and as the energy source for the reaction. It is essential for DNA replication and repair of damaged DNA. The sequence is that of DNA ligase from Burkholderia ambifaria (strain ATCC BAA-244 / DSM 16087 / CCUG 44356 / LMG 19182 / AMMD) (Burkholderia cepacia (strain AMMD)).